The primary structure comprises 359 residues: UDP-N-acetylglucosamine--N-acetylmuramyl-(pentapeptide) pyrophosphoryl-undecaprenol N-acetylglucosamine transferase (359 aa).

UDP-N-acetyl-alpha-D-glucosamine is bound by residues 15 to 17, Asn127, Arg166, Ser191, Ile245, 264 to 269, and Gln290; these read TGG and ALTVSE.

Belongs to the glycosyltransferase 28 family. MurG subfamily.

The protein localises to the cell inner membrane. It carries out the reaction di-trans,octa-cis-undecaprenyl diphospho-N-acetyl-alpha-D-muramoyl-L-alanyl-D-glutamyl-meso-2,6-diaminopimeloyl-D-alanyl-D-alanine + UDP-N-acetyl-alpha-D-glucosamine = di-trans,octa-cis-undecaprenyl diphospho-[N-acetyl-alpha-D-glucosaminyl-(1-&gt;4)]-N-acetyl-alpha-D-muramoyl-L-alanyl-D-glutamyl-meso-2,6-diaminopimeloyl-D-alanyl-D-alanine + UDP + H(+). It functions in the pathway cell wall biogenesis; peptidoglycan biosynthesis. In terms of biological role, cell wall formation. Catalyzes the transfer of a GlcNAc subunit on undecaprenyl-pyrophosphoryl-MurNAc-pentapeptide (lipid intermediate I) to form undecaprenyl-pyrophosphoryl-MurNAc-(pentapeptide)GlcNAc (lipid intermediate II). The protein is UDP-N-acetylglucosamine--N-acetylmuramyl-(pentapeptide) pyrophosphoryl-undecaprenol N-acetylglucosamine transferase of Pseudomonas putida (strain ATCC 700007 / DSM 6899 / JCM 31910 / BCRC 17059 / LMG 24140 / F1).